The sequence spans 652 residues: Regulator of DNA class I crossover intermediates 1 (652 aa).

The binds DNA containing a D-loop DNA-binding region spans 1–231; sequence MNWVGGSRSR…TLFERLNSLG (231 aa). 2 disordered regions span residues 363-434 and 469-506; these read NKTS…NIPS and KISL…EDQI. Basic and acidic residues predominate over residues 377 to 388; sequence YQREYNKNERND. Residues 389–401 are compositionally biased toward polar residues; it reads LSTSFENDYYPSS. Residues 402–417 show a composition bias toward basic and acidic residues; the sequence is SERKEKFENDYQEKTP. Positions 473-498 are enriched in low complexity; sequence DSAQSSRSTSYSPRPTDSCFSSSSDL.

As to quaternary structure, interacts with MSH5. Interacts with TEX11.

The protein localises to the chromosome. In terms of biological role, involved in recombination, probably acting by stabilizing recombination intermediates during meiotic crossover formation. Required for normal germline development and fertility. Required for meiotic progression, complete chromosomal synapsis and crossover formation. Binds double-stranded DNA. However, also binds branched DNA molecules, such as those containing a D-loop or Holliday junction structure. Probably not required for formation of DNA double-strand breaks (DSBs). Also binds RNA in an RNA structure-independent manner, with a preference for binding 3'-UTR regions of mRNAs; may stabilize bound RNAs. This chain is Regulator of DNA class I crossover intermediates 1, found in Homo sapiens (Human).